A 102-amino-acid polypeptide reads, in one-letter code: MNGQNIRIRLKAFDHRVLDASTREIVSTAKRTGASVRGPVPLPTRIEKFTVNRSPHVDKKSREQFEMRTHKRLLDIVDPTPQTVDALMKLDLAAGVDVEIKL.

Belongs to the universal ribosomal protein uS10 family. In terms of assembly, part of the 30S ribosomal subunit.

In terms of biological role, involved in the binding of tRNA to the ribosomes. The polypeptide is Small ribosomal subunit protein uS10 (Allorhizobium ampelinum (strain ATCC BAA-846 / DSM 112012 / S4) (Agrobacterium vitis (strain S4))).